Reading from the N-terminus, the 426-residue chain is 3-phosphoshikimate 1-carboxyvinyltransferase (426 aa).

Residues Lys-22, Ser-23, and Arg-27 each contribute to the 3-phosphoshikimate site. A phosphoenolpyruvate-binding site is contributed by Lys-22. Phosphoenolpyruvate is bound by residues Gly-96 and Arg-124. Ser-170, Ser-171, Gln-172, Ser-198, Asp-314, Asn-337, and Lys-341 together coordinate 3-phosphoshikimate. Residue Gln-172 coordinates phosphoenolpyruvate. Asp-314 functions as the Proton acceptor in the catalytic mechanism. Phosphoenolpyruvate contacts are provided by Arg-345, Arg-387, and Lys-412.

The protein belongs to the EPSP synthase family. As to quaternary structure, monomer.

It localises to the cytoplasm. The catalysed reaction is 3-phosphoshikimate + phosphoenolpyruvate = 5-O-(1-carboxyvinyl)-3-phosphoshikimate + phosphate. The protein operates within metabolic intermediate biosynthesis; chorismate biosynthesis; chorismate from D-erythrose 4-phosphate and phosphoenolpyruvate: step 6/7. In terms of biological role, catalyzes the transfer of the enolpyruvyl moiety of phosphoenolpyruvate (PEP) to the 5-hydroxyl of shikimate-3-phosphate (S3P) to produce enolpyruvyl shikimate-3-phosphate and inorganic phosphate. This Colwellia psychrerythraea (strain 34H / ATCC BAA-681) (Vibrio psychroerythus) protein is 3-phosphoshikimate 1-carboxyvinyltransferase.